The primary structure comprises 206 residues: Potassium-transporting ATPase KdpC subunit (206 aa).

A helical membrane pass occupies residues valine 14–isoleucine 34.

Belongs to the KdpC family. The system is composed of three essential subunits: KdpA, KdpB and KdpC.

The protein localises to the cell inner membrane. In terms of biological role, part of the high-affinity ATP-driven potassium transport (or Kdp) system, which catalyzes the hydrolysis of ATP coupled with the electrogenic transport of potassium into the cytoplasm. This subunit acts as a catalytic chaperone that increases the ATP-binding affinity of the ATP-hydrolyzing subunit KdpB by the formation of a transient KdpB/KdpC/ATP ternary complex. The protein is Potassium-transporting ATPase KdpC subunit of Xanthomonas axonopodis pv. citri (strain 306).